Here is a 326-residue protein sequence, read N- to C-terminus: Putative nickel insertion protein (326 aa).

Belongs to the LarC family.

This Enterococcus faecalis (strain ATCC 700802 / V583) protein is Putative nickel insertion protein.